The chain runs to 296 residues: MKKALGILAILLILVGGYFAYDKYMDNKAKEQVEYFLDKTLRKSGKGSYKYVDYKPIGGEIIIKDVYYRDRNGEEFKIEEIIIEKLSETEGKFLFKNVKPLKVKGKGLLEEYGYKDPKFNLFVSYEAKPKEKEFHLRSLSLDYPEAFEVNISFILGNYDHAFWKTVALSDRPPEEVSFQVLSELGSIKINSLEVVYRDKGFKERVIKKEAQKRGKTPEEFKKELIRKIEEEKLKARSEFERNLLDAFEKFLEKGKEIKVVIKPNPPLKIQDLFVVAAVQKDERELLKLLNPVIEVK.

A signal peptide spans 1 to 20 (MKKALGILAILLILVGGYFA).

This is an uncharacterized protein from Aquifex aeolicus (strain VF5).